Reading from the N-terminus, the 418-residue chain is MEIDSATNGNSDTVMTESAATITPSPVVVSSSRSNQFTESLKLEHQLLRVPFEHYKKTIRTNHRSFEKEVSTIVNGVGELADSDWSKDDTVSRLTCLVTRLQGLKRKLEEGSNVENLQAQRCRARIDHLDSVDVENITEWNNTKLKRILVDYMLRMSYFETATKLSESSNIMDLVDIDIFREAKKVIDALKNREVASALTWCADNKTRLKKSKSKFEFQLRLQEFIELVRVDTAESYKKAIQYARKHLASWGTTHMKELQHVLATLAFKSTTECSKYKVLFELRQWDVLVDQFKQEFCKLYGMTMEPLLNIYLQAGLSALKTPYGLEEGCTKEDPLSQENFRKLALPLPFSKQHHSKLVCYISKELMDTENPPQVLPNGYVYSTKALKEMAEKNGGKITCPRTGLVCNYTELVKAYIS.

Positions 141 to 173 constitute a LisH domain; the sequence is NNTKLKRILVDYMLRMSYFETATKLSESSNIMD. The region spanning 179–236 is the CTLH domain; it reads IFREAKKVIDALKNREVASALTWCADNKTRLKKSKSKFEFQLRLQEFIELVRVDTAES. The segment at 330-403 adopts an RING-Gid-type zinc-finger fold; that stretch reads CTKEDPLSQE…NGGKITCPRT (74 aa).

As to quaternary structure, interacts with RANBPM.

It is found in the cytoplasm. The sequence is that of Protein MAEA homolog from Arabidopsis thaliana (Mouse-ear cress).